The following is a 157-amino-acid chain: Transcription elongation factor GreA (157 aa).

A coiled-coil region spans residues 46–73; that stretch reads AEYHSARERQSFIEGRIAELEEIISAAE.

Belongs to the GreA/GreB family.

Its function is as follows. Necessary for efficient RNA polymerase transcription elongation past template-encoded arresting sites. The arresting sites in DNA have the property of trapping a certain fraction of elongating RNA polymerases that pass through, resulting in locked ternary complexes. Cleavage of the nascent transcript by cleavage factors such as GreA or GreB allows the resumption of elongation from the new 3'terminus. GreA releases sequences of 2 to 3 nucleotides. This is Transcription elongation factor GreA from Acidiphilium cryptum (strain JF-5).